Here is a 136-residue protein sequence, read N- to C-terminus: Small ribosomal subunit protein uS8c (136 aa).

Belongs to the universal ribosomal protein uS8 family. In terms of assembly, part of the 30S ribosomal subunit.

Its subcellular location is the plastid. The protein resides in the chloroplast. One of the primary rRNA binding proteins, it binds directly to 16S rRNA central domain where it helps coordinate assembly of the platform of the 30S subunit. This chain is Small ribosomal subunit protein uS8c (rps8), found in Agrostis stolonifera (Creeping bentgrass).